We begin with the raw amino-acid sequence, 284 residues long: Proline-rich protein 32 (284 aa).

Disordered regions lie at residues 59–80 (RPPF…APRH), 97–119 (EINS…NMSQ), and 143–171 (SGNN…RGPP).

In Mus musculus (Mouse), this protein is Proline-rich protein 32 (Prr32).